Reading from the N-terminus, the 209-residue chain is Glycerol-3-phosphate acyltransferase (209 aa).

A run of 5 helical transmembrane segments spans residues 13 to 33 (ALIA…GLLL), 63 to 83 (LAAA…LIAQ), 94 to 114 (PGLL…WLGF), 127 to 147 (LLGI…SIAF), and 151 to 171 (YSSL…WILG).

This sequence belongs to the PlsY family. In terms of assembly, probably interacts with PlsX.

It localises to the cell inner membrane. The enzyme catalyses an acyl phosphate + sn-glycerol 3-phosphate = a 1-acyl-sn-glycero-3-phosphate + phosphate. It participates in lipid metabolism; phospholipid metabolism. Its function is as follows. Catalyzes the transfer of an acyl group from acyl-phosphate (acyl-PO(4)) to glycerol-3-phosphate (G3P) to form lysophosphatidic acid (LPA). This enzyme utilizes acyl-phosphate as fatty acyl donor, but not acyl-CoA or acyl-ACP. In Allorhizobium ampelinum (strain ATCC BAA-846 / DSM 112012 / S4) (Agrobacterium vitis (strain S4)), this protein is Glycerol-3-phosphate acyltransferase.